A 135-amino-acid chain; its full sequence is ARGOS-like protein (135 aa).

The tract at residues 71-122 (FSLESMVVLVGLTASLLILPLILPPLPPPPFMLLLIPIGIMVLLMVLAFMPS) is organ Size Related (OSR) domain. A run of 2 helical transmembrane segments spans residues 76–96 (MVVLVGLTASLLILPLILPPL) and 100–120 (PFMLLLIPIGIMVLLMVLAFM).

Belongs to the plant organ size related (OSR) protein family. As to expression, expressed in cotyledons, roots, flowers, siliques and leaves.

It localises to the membrane. The protein localises to the nucleus. It is found in the cytoplasm. The protein resides in the endoplasmic reticulum. In terms of biological role, promotes cell expansion-dependent organ growth, probably via a brassinosteroids signaling pathway. Acts downstream of BRI1. The polypeptide is ARGOS-like protein (ARL) (Arabidopsis thaliana (Mouse-ear cress)).